Here is a 293-residue protein sequence, read N- to C-terminus: Ribosomal protein L11 methyltransferase (293 aa).

S-adenosyl-L-methionine-binding residues include Thr145, Gly166, Asp188, and Asn230.

The protein belongs to the methyltransferase superfamily. PrmA family.

The protein resides in the cytoplasm. It catalyses the reaction L-lysyl-[protein] + 3 S-adenosyl-L-methionine = N(6),N(6),N(6)-trimethyl-L-lysyl-[protein] + 3 S-adenosyl-L-homocysteine + 3 H(+). In terms of biological role, methylates ribosomal protein L11. The polypeptide is Ribosomal protein L11 methyltransferase (Yersinia pseudotuberculosis serotype O:3 (strain YPIII)).